The following is a 776-amino-acid chain: MSVLEQLGALDIGTNEQVDETLQRIADEEAKVNEKLESLLAKQCQIEAKMSGIGRSLSLLHTVDSDSNKLNDQIVNTAQLAESVSAKVRRLDLARCRASECQQRVHDLIDLHLCSQGVVKAIGEEDYEKSATHIARFLAMDQQLLRRTADDVQGSITSVSDAVKTLEDATEKTRVLIAKRFDEAVKADDLASVERFFKIFPLVGCHRTGIEKFSLYICQKLANKAQKELRNAQDIAKAESRLQLAYADRLTAILENFARVVEVNQPIIEAFYGQASSSLIDMVSILQHECDTEVKNLLMEFNKNRQIQYRSKQVNESTQRSAGGGNLGSNSIQALGHYRKPSGGSVDKLNPKEIDAIIAEITVMHARVELYFRFMRRRLQVHVETCVPEKEQFDIMERYEKIMKNSDLRRQMQEILSTYLLLERYFMEESVLKAIGLDTYESGQQCSSMVDDVFFILRKSIRRALTTQSINGTCAVINNVAACLDGDFVNALKAPLKSGYPSGYIDLAQAYNAIQTSLQQGKLHSSDADRGRANFLVQLNNADISTEYIETLCQTMEQEIAGTFPQTTQVERQMLDSCLTELKAVRDALKATVDFGMQQLRSSVIKPRLNPWINQFLNYSHNLNEEELAAYEAGETFVQFFIVQLDGLLNSFKNSLSPRNYDALVSILATEVTIQLERAIKKISFNRLGGLVLDQEVRALGSYLTGATSWSVRDKMTRISQIATLLNLDKITELSEYWNPENNKEMSSWHLTPNEVRTFLTLRNDFRIEDIKRLQL.

Phosphoserine occurs at positions 342 and 345.

This sequence belongs to the COG4 family. Component of the conserved oligomeric Golgi complex which is composed of eight different subunits and is required for normal Golgi morphology and localization.

It localises to the golgi apparatus membrane. Functionally, required for normal Golgi function. This chain is Conserved oligomeric Golgi complex subunit 4, found in Drosophila melanogaster (Fruit fly).